Here is a 378-residue protein sequence, read N- to C-terminus: Probable dihydroorotase-like protein (378 aa).

It belongs to the metallo-dependent hydrolases superfamily. DHOase family. PyrC' subfamily.

Functionally, non-functional DHOase. This Helicobacter pylori (strain J99 / ATCC 700824) (Campylobacter pylori J99) protein is Probable dihydroorotase-like protein (pyrC').